The primary structure comprises 281 residues: 2-dehydro-3-deoxyphosphooctonate aldolase (281 aa).

This sequence belongs to the KdsA family.

The protein resides in the cytoplasm. It carries out the reaction D-arabinose 5-phosphate + phosphoenolpyruvate + H2O = 3-deoxy-alpha-D-manno-2-octulosonate-8-phosphate + phosphate. It participates in carbohydrate biosynthesis; 3-deoxy-D-manno-octulosonate biosynthesis; 3-deoxy-D-manno-octulosonate from D-ribulose 5-phosphate: step 2/3. It functions in the pathway bacterial outer membrane biogenesis; lipopolysaccharide biosynthesis. In Pseudomonas fluorescens (strain SBW25), this protein is 2-dehydro-3-deoxyphosphooctonate aldolase.